The primary structure comprises 440 residues: Gamma-aminobutyric acid receptor subunit pi (440 aa).

Positions 1–23 (MSYSLYLAFVCLNLLAQRMCIQG) are cleaved as a signal peptide. The Extracellular portion of the chain corresponds to 24 to 241 (NQFNVEVSRS…LVLQFELRRN (218 aa)). N-linked (GlcNAc...) asparagine glycans are attached at residues Asn43, Asn102, and Asn145. Cys160 and Cys174 are oxidised to a cystine. N-linked (GlcNAc...) asparagine glycosylation is found at Asn196 and Asn228. Residues 242-262 (VLYFILETYVPSTFLVVLSWV) traverse the membrane as a helical segment. Residues 263 to 270 (SFWISLES) are Cytoplasmic-facing. Residues 271–290 (VPARTCIGVTTVLSMTTLMI) form a helical membrane-spanning segment. The Extracellular segment spans residues 291-301 (GSRTSLPNTNC). The chain crosses the membrane as a helical span at residues 302–322 (FIKAIDVYLGICFSFVFGALL). The Cytoplasmic portion of the chain corresponds to 323 to 419 (EYAVAHYSSL…NPSNVDRYSK (97 aa)). The chain crosses the membrane as a helical span at residues 420–440 (LLFPLIFMLANVFYWAYYMYF).

It belongs to the ligand-gated ion channel (TC 1.A.9) family. Gamma-aminobutyric acid receptor (TC 1.A.9.5) subfamily. GABRP sub-subfamily. In terms of assembly, heteropentamer, formed by a combination of alpha (GABRA1-6), beta (GABRB1-3), gamma (GABRG1-3), delta (GABRD), epsilon (GABRE), rho (GABRR1-3), pi (GABRP) and theta (GABRQ) chains, each subunit exhibiting distinct physiological and pharmacological properties. Expressed in lungs, in alveolar epithelium.

It localises to the cell membrane. The protein localises to the apical cell membrane. It catalyses the reaction chloride(in) = chloride(out). Functionally, pi subunit of the heteropentameric ligand-gated chloride channel gated by gamma-aminobutyric acid (GABA). GABA-gated chloride channels, also named GABA(A) receptors (GABAAR), consist of five subunits arranged around a central pore and contain GABA active binding site(s) located at the alpha and beta subunit interfaces. When activated by GABA, GABAARs selectively allow the flow of chloride anions across the cell membrane down their electrochemical gradient. Pi-containing GABAARs are mostly located in peripheral tissues. In the uterus, pi subunits modulate uterus contraction by altering the sensitivity of GABAARs to pregnanolone. In the lungs, pi-containing GABAARs contribute to pulmonary fluid transport via luminal secretion of chloride. The chain is Gamma-aminobutyric acid receptor subunit pi from Rattus norvegicus (Rat).